Here is a 341-residue protein sequence, read N- to C-terminus: MDEPVRLSLAEVHVLCRDTLVAAGLGEEHAQAIARSITRAEADECHSHGLYRLIGYVASVRSGKAERHALPALARATPAVLRVDAKHGFAPLAVETGVPALIAAAKEIGIAALAIHDCYHFSALWADIEPAVEAGLAAWCFTVGQCCVAPAGGTTPLLGTNPFAFGWPGPSGRPFIFDFATSAAARGEIELKRRGGEKIPPGWAVGPDGAPTTDPAAALAGALLPFGGHKGSALSMMVELIAGPLIGDLTSRQSKAVENGDGGPPLGGELFIAIDPAVFGTGNLSSRLADADELFALAKAQPGVRLPSERRYQARERSRTNGIAVPAALFAELQALGPRGS.

The active-site Charge relay system is the S47. H48 acts as the Proton donor in catalysis. Substrate is bound at residue R52. Position 120 to 124 (120 to 124 (HFSAL)) interacts with NADP(+). T160 lines the substrate pocket. 178–180 (DFA) contributes to the NADP(+) binding site. 186–187 (RG) is a binding site for substrate. Catalysis depends on E188, which acts as the Charge relay system. Residues 229-230 (HK) and 305-311 (RLPSERR) contribute to the NADP(+) site.

Belongs to the LDH2/MDH2 oxidoreductase family. In terms of assembly, homodimer.

It catalyses the reaction L-proline + NAD(+) = 1-pyrroline-2-carboxylate + NADH + H(+). The catalysed reaction is L-proline + NADP(+) = 1-pyrroline-2-carboxylate + NADPH + H(+). Its function is as follows. Catalyzes the reduction of Delta(1)-pyrroline-2-carboxylate (Pyr2C) to L-proline, using NADPH as the electron donor. Is likely involved in a degradation pathway that converts cis- and trans-3-hydroxy-L-proline (c3LHyp and t3LHyp) to L-proline, which would allow S.novella to grow on c3LHyp or t3LHyp as a sole carbon source. The chain is Delta(1)-pyrroline-2-carboxylate reductase from Ancylobacter novellus (strain ATCC 8093 / DSM 506 / JCM 20403 / CCM 1077 / IAM 12100 / NBRC 12443 / NCIMB 10456) (Starkeya novella).